Consider the following 878-residue polypeptide: Alanine--tRNA ligase (878 aa).

H567, H571, C669, and H673 together coordinate Zn(2+).

The protein belongs to the class-II aminoacyl-tRNA synthetase family. Requires Zn(2+) as cofactor.

The protein localises to the cytoplasm. The catalysed reaction is tRNA(Ala) + L-alanine + ATP = L-alanyl-tRNA(Ala) + AMP + diphosphate. Catalyzes the attachment of alanine to tRNA(Ala) in a two-step reaction: alanine is first activated by ATP to form Ala-AMP and then transferred to the acceptor end of tRNA(Ala). Also edits incorrectly charged Ser-tRNA(Ala) and Gly-tRNA(Ala) via its editing domain. This chain is Alanine--tRNA ligase, found in Rickettsia akari (strain Hartford).